The following is a 60-amino-acid chain: Alpha-conotoxin-like 289 (60 aa).

The signal sequence occupies residues 1 to 16 (MFTVFLLVVLATTVVS). Residues 17–42 (FTSDRAFRGRNAAAKASGLVGLTDKR) constitute a propeptide that is removed on maturation. Residue Gln-43 is modified to Pyrrolidone carboxylic acid. 2 disulfides stabilise this stretch: Cys-45-Cys-51 and Cys-46-Cys-59. Residues 47 to 49 (SYP) form a ser-Xaa-Pro motif, crucial for potent interaction with nAChR region. The residue at position 59 (Cys-59) is a Cysteine amide.

The protein belongs to the conotoxin A superfamily. Expressed by the venom duct.

The protein resides in the secreted. Functionally, alpha-conotoxins act on postsynaptic membranes, they bind to the nicotinic acetylcholine receptors (nAChR) and thus inhibit them. In Conus ammiralis (Admiral cone), this protein is Alpha-conotoxin-like 289.